The following is a 400-amino-acid chain: Nicotinate phosphoribosyltransferase (400 aa).

His-220 bears the Phosphohistidine; by autocatalysis mark.

It belongs to the NAPRTase family. Transiently phosphorylated on a His residue during the reaction cycle. Phosphorylation strongly increases the affinity for substrates and increases the rate of nicotinate D-ribonucleotide production. Dephosphorylation regenerates the low-affinity form of the enzyme, leading to product release.

It carries out the reaction nicotinate + 5-phospho-alpha-D-ribose 1-diphosphate + ATP + H2O = nicotinate beta-D-ribonucleotide + ADP + phosphate + diphosphate. It functions in the pathway cofactor biosynthesis; NAD(+) biosynthesis; nicotinate D-ribonucleotide from nicotinate: step 1/1. In terms of biological role, catalyzes the synthesis of beta-nicotinate D-ribonucleotide from nicotinate and 5-phospho-D-ribose 1-phosphate at the expense of ATP. The protein is Nicotinate phosphoribosyltransferase of Citrobacter koseri (strain ATCC BAA-895 / CDC 4225-83 / SGSC4696).